The chain runs to 53 residues: Large ribosomal subunit protein bL32c (53 aa).

This sequence belongs to the bacterial ribosomal protein bL32 family.

Its subcellular location is the plastid. It is found in the chloroplast. The chain is Large ribosomal subunit protein bL32c from Phaseolus vulgaris (Kidney bean).